A 515-amino-acid polypeptide reads, in one-letter code: Brahma-associated protein of 60 kDa (515 aa).

The interval 1-124 is disordered; it reads MSQRFAPGQA…GGSKSDFATA (124 aa). Residues 17 to 34 show a composition bias toward pro residues; that stretch reads QPPPPAPGMRPYPPPGAS. The segment covering 49–62 has biased composition (low complexity); sequence PVPGTANVAGVPGV. Gly residues predominate over residues 90-103; it reads TGAGGGGVGSGGGS. Positions 116–204 are DNA-binding; it reads GSKSDFATAK…SKEPTNDGEE (89 aa). Residues 291 to 368 form the SWIB/MDM2 domain; that stretch reads YQPLQFKLDP…PQRLNPLLHP (78 aa).

As to quaternary structure, there are 2 distinct Brahma complexes in the fruit fly, the Brahma-associated proteins (BAP) and Polybromo-containing BAP (PBAP) complexes, which are composed of common subunits Brm, Mor, Snr1/Bap45, Bap111/Dalo, Bap55, Bap60 and Act42A/Bap47, and additional signature subunits osa in the BAP complex and Polybromo and Bap170 in the PBAP complex. Interacts with sisA and sc. Interacts with mor. Interacts with p53. Interacts with erm (via N-terminal). Interacts with akirin; interaction is immune stimulation-dependent; activates selected Rel target gene promoters.

Functionally, involved in the recruitment and site-specific anchoring of the Brahma complex at specific promoter sites. The Brahma complex is a multiprotein complex which is the equivalent of the yeast SWI/SNF complex and acts by remodeling the chromatin by catalyzing an ATP-dependent alteration in the structure of nucleosomal DNA. This complex can both serve as a transcriptional coactivator or corepressor, depending on the context. Participates in X-chromosomal dosage compensation. Participates in neurogenesis. The chain is Brahma-associated protein of 60 kDa (Bap60) from Drosophila melanogaster (Fruit fly).